The chain runs to 528 residues: Lanosterol 14-alpha demethylase (528 aa).

The helical transmembrane segment at 15–37 (LSLSVTQQISILLGVPFVYNLVW) threads the bilayer. Tyr-64 provides a ligand contact to oteseconazole. Itraconazole is bound at residue Tyr-118. Gly-307 contacts posaconazole. His-377 contributes to the oteseconazole binding site. Position 470 (Cys-470) interacts with heme.

Belongs to the cytochrome P450 family. The cofactor is heme.

The protein localises to the endoplasmic reticulum membrane. It catalyses the reaction a 14alpha-methyl steroid + 3 reduced [NADPH--hemoprotein reductase] + 3 O2 = a Delta(14) steroid + formate + 3 oxidized [NADPH--hemoprotein reductase] + 4 H2O + 4 H(+). The catalysed reaction is a 14alpha-methyl steroid + reduced [NADPH--hemoprotein reductase] + O2 = a 14alpha-hydroxymethyl steroid + oxidized [NADPH--hemoprotein reductase] + H2O + H(+). It carries out the reaction a 14alpha-hydroxymethyl steroid + reduced [NADPH--hemoprotein reductase] + O2 = a 14alpha-formyl steroid + oxidized [NADPH--hemoprotein reductase] + 2 H2O + H(+). The enzyme catalyses a 14alpha-formyl steroid + reduced [NADPH--hemoprotein reductase] + O2 = a Delta(14) steroid + formate + oxidized [NADPH--hemoprotein reductase] + H2O + 2 H(+). It catalyses the reaction lanosterol + 3 reduced [NADPH--hemoprotein reductase] + 3 O2 = 4,4-dimethyl-5alpha-cholesta-8,14,24-trien-3beta-ol + formate + 3 oxidized [NADPH--hemoprotein reductase] + 4 H2O + 4 H(+). The catalysed reaction is lanosterol + reduced [NADPH--hemoprotein reductase] + O2 = 32-hydroxylanosterol + oxidized [NADPH--hemoprotein reductase] + H2O + H(+). It carries out the reaction 32-hydroxylanosterol + reduced [NADPH--hemoprotein reductase] + O2 = 32-oxolanosterol + oxidized [NADPH--hemoprotein reductase] + 2 H2O + H(+). The enzyme catalyses 32-oxolanosterol + reduced [NADPH--hemoprotein reductase] + O2 = 4,4-dimethyl-5alpha-cholesta-8,14,24-trien-3beta-ol + formate + oxidized [NADPH--hemoprotein reductase] + H2O + 2 H(+). It catalyses the reaction eburicol + 3 reduced [NADPH--hemoprotein reductase] + 3 O2 = 14-demethyleburicol + formate + 3 oxidized [NADPH--hemoprotein reductase] + 4 H2O + 4 H(+). The catalysed reaction is eburicol + reduced [NADPH--hemoprotein reductase] + O2 = 32-hydroxyeburicol + oxidized [NADPH--hemoprotein reductase] + H2O + H(+). It carries out the reaction 32-hydroxyeburicol + reduced [NADPH--hemoprotein reductase] + O2 = 32-oxoeburicol + oxidized [NADPH--hemoprotein reductase] + 2 H2O + H(+). The enzyme catalyses 32-oxoeburicol + reduced [NADPH--hemoprotein reductase] + O2 = 14-demethyleburicol + formate + oxidized [NADPH--hemoprotein reductase] + H2O + 2 H(+). The protein operates within steroid biosynthesis; zymosterol biosynthesis; zymosterol from lanosterol: step 1/6. The catalytic activity is inhibited by the binding of azoles clotrimazole, miconazole, fluconazole, ketoconazole, oteseconazole (VT-1161), tetraconazole, the triazole SCH39304, and the triazole derivative ICI 153066. Its function is as follows. Sterol 14alpha-demethylase that plays a critical role in the third module of ergosterol biosynthesis pathway, being ergosterol the major sterol component in fungal membranes that participates in a variety of functions. The third module or late pathway involves the ergosterol synthesis itself through consecutive reactions that mainly occur in the endoplasmic reticulum (ER) membrane. In filamentous fungi, during the initial step of this module, lanosterol (lanosta-8,24-dien-3beta-ol) can be metabolized to eburicol. Sterol 14alpha-demethylase catalyzes the three-step oxidative removal of the 14alpha-methyl group (C-32) of both these sterols in the form of formate, and converts eburicol and lanosterol to 14-demethyleburicol (4,4,24-trimethylergosta-8,14,24(28)-trienol) and 4,4-dimethyl-5alpha-cholesta-8,14,24-trien-3beta-ol, respectively, which are further metabolized by other enzymes in the pathway to ergosterol. Can also use substrates not intrinsic to fungi, such as 24,25-dihydrolanosterol (DHL), producing 4,4-dimethyl-8,14-cholestadien-3-beta-ol, but at lower rates than the endogenous substrates. The protein is Lanosterol 14-alpha demethylase of Candida albicans (strain SC5314 / ATCC MYA-2876) (Yeast).